Reading from the N-terminus, the 573-residue chain is DNA polymerase lambda (573 aa).

A BRCT domain is found at 35-131 (DARGWLSSLR…KLTDTDGFSL (97 aa)). The interval 126–235 (TDGFSLSSPK…GPDPAPEALG (110 aa)) is disordered. A compositionally biased stretch (polar residues) spans 127–149 (DGFSLSSPKRSLNEPQPSKSGQD). The segment at 263–277 (KAYNVQGDKWRALGY) is DNA-binding. Lysine 310 acts as the Schiff-base intermediate with DNA in catalysis. The DNA-binding stretch occupies residues 343–346 (GTKT). Residues arginine 384, 415 to 418 (SFRR), and 424 to 427 (GDVD) contribute to the dCTP site. The involved in primer binding stretch occupies residues 418–427 (RGKVTCGDVD). 3 residues coordinate Mn(2+): aspartate 425, aspartate 427, and aspartate 488. The interval 464–503 (ENGQQQKYLGVCRLPGAGQRHRRLDIIVVPYSEFACALLY) is DNA-binding. Position 511 (asparagine 511) interacts with dCTP.

This sequence belongs to the DNA polymerase type-X family. As to quaternary structure, interacts with PCNA. Interacts with PAXX; promoting POLL recruitment to double-strand breaks (DSBs) and stimulation of the end-filling activity of POLL. Interacts with XRCC4; promoting POLL recruitment to double-strand breaks (DSBs) and stimulation of the end-filling activity of POLL. Interacts with NHEJ1/XLF; promoting POLL recruitment to double-strand breaks (DSBs) and stimulation of the end-filling activity of POLL. Requires Mn(2+) as cofactor.

It is found in the nucleus. The catalysed reaction is DNA(n) + a 2'-deoxyribonucleoside 5'-triphosphate = DNA(n+1) + diphosphate. Functionally, DNA polymerase that functions in several pathways of DNA repair. Involved in base excision repair (BER) responsible for repair of lesions that give rise to abasic (AP) sites in DNA. Also contributes to DNA double-strand break repair by non-homologous end joining and homologous recombination. Has both template-dependent and template-independent (terminal transferase) DNA polymerase activities. Also has a 5'-deoxyribose-5-phosphate lyase (dRP lyase) activity. This Rattus norvegicus (Rat) protein is DNA polymerase lambda.